The chain runs to 86 residues: Toxin ICK-18 (86 aa).

Residues Met-1–Gly-19 form the signal peptide. 4 disulfide bridges follow: Cys-35–Cys-49, Cys-42–Cys-61, Cys-48–Cys-76, and Cys-79–Cys-86.

This sequence belongs to the neurotoxin 21 family. Expressed by the venom gland.

It localises to the secreted. Functionally, probable neurotoxin with ion channel impairing activity. The sequence is that of Toxin ICK-18 from Trittame loki (Brush-footed trapdoor spider).